Here is a 335-residue protein sequence, read N- to C-terminus: MSVGRIRYDWHKAEIRAVYDTPLLELIYQAASVHRQFHNPKQIQVCKLISIKTGACPEDCSYCAQSSRYQTEVKPQALLDKQTVVEIAQNAKQKGVSRVCMGAAWREVRDNSQFDRVLEMVKDVTDMGLEVCCTLGMLTSEQAKKLETAGLYAYNHNLDTSSDYYSTIITTRTYGDRLNTIENVRQTNVTVCSGGILGLGESIDDRVAMLQTLATLNPHPESVPINILSQVEGTPLEDQPDVPVWDVVRMIATARIVMPTSDVRLSAGRARLSQVEQAFCFMAGANSIFSSDDNKMLTVTTPCPDYDADQEMLNLLGLEMRPPSQRPQPVVMGNS.

Residues 41–269 (KQIQVCKLIS…TSDVRLSAGR (229 aa)) enclose the Radical SAM core domain. Residues Cys56, Cys60, and Cys63 each contribute to the [4Fe-4S] cluster site. Residues Cys100, Cys132, Cys192, and Arg264 each contribute to the [2Fe-2S] cluster site.

The protein belongs to the radical SAM superfamily. Biotin synthase family. Homodimer. [4Fe-4S] cluster is required as a cofactor. [2Fe-2S] cluster serves as cofactor.

The enzyme catalyses (4R,5S)-dethiobiotin + (sulfur carrier)-SH + 2 reduced [2Fe-2S]-[ferredoxin] + 2 S-adenosyl-L-methionine = (sulfur carrier)-H + biotin + 2 5'-deoxyadenosine + 2 L-methionine + 2 oxidized [2Fe-2S]-[ferredoxin]. Its pathway is cofactor biosynthesis; biotin biosynthesis; biotin from 7,8-diaminononanoate: step 2/2. Functionally, catalyzes the conversion of dethiobiotin (DTB) to biotin by the insertion of a sulfur atom into dethiobiotin via a radical-based mechanism. The polypeptide is Biotin synthase (Nostoc sp. (strain PCC 7120 / SAG 25.82 / UTEX 2576)).